The sequence spans 101 residues: Small ribosomal subunit protein uS14A (101 aa).

The interval 28-57 is disordered; it reads KDIIRSPSSAPEQRSTAQRALARQPRDASP. Positions 33–45 are enriched in polar residues; that stretch reads SPSSAPEQRSTAQ.

Belongs to the universal ribosomal protein uS14 family. As to quaternary structure, part of the 30S ribosomal subunit. Contacts proteins S3 and S10.

Functionally, binds 16S rRNA, required for the assembly of 30S particles and may also be responsible for determining the conformation of the 16S rRNA at the A site. The sequence is that of Small ribosomal subunit protein uS14A from Mycobacterium bovis (strain ATCC BAA-935 / AF2122/97).